The following is a 182-amino-acid chain: ATP-dependent protease subunit HslV (182 aa).

The active site involves threonine 12. Residues alanine 167, cysteine 170, and threonine 173 each contribute to the Na(+) site.

It belongs to the peptidase T1B family. HslV subfamily. A double ring-shaped homohexamer of HslV is capped on each side by a ring-shaped HslU homohexamer. The assembly of the HslU/HslV complex is dependent on binding of ATP.

The protein localises to the cytoplasm. The catalysed reaction is ATP-dependent cleavage of peptide bonds with broad specificity.. With respect to regulation, allosterically activated by HslU binding. In terms of biological role, protease subunit of a proteasome-like degradation complex believed to be a general protein degrading machinery. The chain is ATP-dependent protease subunit HslV from Paramagnetospirillum magneticum (strain ATCC 700264 / AMB-1) (Magnetospirillum magneticum).